Consider the following 936-residue polypeptide: Pre-rRNA-processing protein FHL1 (936 aa).

Disordered stretches follow at residues 1 to 90 (MDGE…NGNL) and 139 to 169 (DHSR…QDNT). Residues 9 to 29 (ESSNHVGTSSPTTETQFTIDS) show a composition bias toward polar residues. Position 44 is a phosphoserine (serine 44). The span at 139-150 (DHSREVSSKEDI) shows a compositional bias: basic and acidic residues. Serine 228 is subject to Phosphoserine. A phosphothreonine mark is found at threonine 230 and threonine 247. A compositionally biased stretch (polar residues) spans 243 to 257 (PPQNTVTENNSTDAE). Residues 243-270 (PPQNTVTENNSTDAETTQRKLSEPIDAS) form a disordered region. At serine 264 the chain carries Phosphoserine. An FHA domain is found at 300–357 (AIIGRRSENDFSHKVDVNLGPSKSISRRHAQIFYNFGTGRFELSIIGKNGAFVDDIFV). Over residues 384–395 (EQERNDDSKSPE) the composition is skewed to basic and acidic residues. Residues 384 to 442 (EQERNDDSKSPENADIAESEINTRNLKKNEPKSKKKITTGAKPKKAQTKPAVKKEKKPP) are disordered. Basic residues predominate over residues 416–430 (SKKKITTGAKPKKAQ). Residues 460-552 (TKPTVSYSAM…ERQKKKQSEI (93 aa)) constitute a DNA-binding region (fork-head). Residues 718-936 (AKAQHSKPIR…EVNVSLEEKL (219 aa)) form a disordered region. Polar residues-rich tracts occupy residues 742 to 753 (SQLSASASSHPN) and 765 to 777 (DPSS…QPRQ). 2 stretches are compositionally biased toward low complexity: residues 779-795 (ARAT…AAAS) and 815-853 (ESGT…TSSE). The span at 854–863 (SESESDSGSE) shows a compositional bias: acidic residues. Over residues 864 to 911 (VDEKNNKNEKIDSESIKNNESKDDIPSKDENSSNDNREISKTDEEGHD) the composition is skewed to basic and acidic residues.

It is found in the nucleus. Its function is as follows. Acts as a transcriptional regulator that recruits coactivator IFH1 to the promoters of ribosomal protein genes. Recruited to ribosomal gene promoters by RAP1. This Saccharomyces cerevisiae (strain ATCC 204508 / S288c) (Baker's yeast) protein is Pre-rRNA-processing protein FHL1 (FHL1).